Here is a 123-residue protein sequence, read N- to C-terminus: Small ribosomal subunit protein bS16 (123 aa).

The interval 87–123 (VKNNPVKAKPGKRAQERAAEKAQKVADAAAAAADAAE) is disordered. Over residues 99-110 (RAQERAAEKAQK) the composition is skewed to basic and acidic residues. Residues 111 to 123 (VADAAAAAADAAE) are compositionally biased toward low complexity.

It belongs to the bacterial ribosomal protein bS16 family.

This is Small ribosomal subunit protein bS16 from Rhizobium johnstonii (strain DSM 114642 / LMG 32736 / 3841) (Rhizobium leguminosarum bv. viciae).